The primary structure comprises 275 residues: Putative carbamate hydrolase RutD (275 aa).

The AB hydrolase-1 domain maps to 15–116 (TVVLSSGLGG…SLVVINGWTV (102 aa)).

It belongs to the AB hydrolase superfamily. Hydrolase RutD family.

The enzyme catalyses carbamate + 2 H(+) = NH4(+) + CO2. Its function is as follows. Involved in pyrimidine catabolism. May facilitate the hydrolysis of carbamate, a reaction that can also occur spontaneously. This chain is Putative carbamate hydrolase RutD, found in Pantoea ananatis (strain LMG 20103).